The following is a 139-amino-acid chain: MFDIGFTELLLVGLVALMVLGPERLPGAVRTTGLWVGRLKRSFSNIKAEVEREIGADEIRRQLHNERILDLEREMKQSIMPPPASNPAATPPSPPSEGAGQPANAASSSPGDTVTPAANPPAPSTETAQPLRSDRPSEP.

The chain crosses the membrane as a helical span at residues 1–21; that stretch reads MFDIGFTELLLVGLVALMVLG. The interval 69-139 is disordered; sequence LDLEREMKQS…PLRSDRPSEP (71 aa). Residues 80–95 are compositionally biased toward pro residues; that stretch reads MPPPASNPAATPPSPP.

This sequence belongs to the TatB family. As to quaternary structure, the Tat system comprises two distinct complexes: a TatABC complex, containing multiple copies of TatA, TatB and TatC subunits, and a separate TatA complex, containing only TatA subunits. Substrates initially bind to the TatABC complex, which probably triggers association of the separate TatA complex to form the active translocon.

It is found in the cell inner membrane. Functionally, part of the twin-arginine translocation (Tat) system that transports large folded proteins containing a characteristic twin-arginine motif in their signal peptide across membranes. Together with TatC, TatB is part of a receptor directly interacting with Tat signal peptides. TatB may form an oligomeric binding site that transiently accommodates folded Tat precursor proteins before their translocation. In Stutzerimonas stutzeri (strain A1501) (Pseudomonas stutzeri), this protein is Sec-independent protein translocase protein TatB.